The following is a 325-amino-acid chain: MYASKLKKGDEIRIVSPATSMSILSNEAKIQAKTALERLGYRVTIAEHANECNEFDSSSIESRVHDLHAAFFDPGVKAILTTLGGFNSNQLLRYLDYEKIKRHPKILCGYSDITALCNAIYQKTGLVTYSGPHFSTFAMKKGLDYTEEYFLSCCASDDPFEIHPSSEWSDDRWFLDQENRRFYPNNGPVVIQEGYAEGTLIGGNLCTLNLLQGTEYFPETEHTILLIEDDYMSDIHMFDRDLQSLIHLPAFSHVKAILIGRFQKASNVSIDLVKAMIETKKELSGIPIIANINAGHTSPIATFPIGGTCRIEAISGTSRIWIDKH.

Ser-111 serves as the catalytic Nucleophile. Residues Glu-228 and His-296 each act as charge relay system in the active site.

This sequence belongs to the peptidase S66 family.

The chain is Putative carboxypeptidase YocD (yocD) from Bacillus subtilis (strain 168).